A 433-amino-acid polypeptide reads, in one-letter code: Probable beta-1,3-galactosyl-O-glycosyl-glycoprotein beta-1,6-N-acetylglucosaminyltransferase 7 (433 aa).

Topologically, residues 1 to 8 are cytoplasmic; that stretch reads MSQLRTTK. A helical; Signal-anchor for type II membrane protein transmembrane segment spans residues 9 to 25; the sequence is AGLVACGMICAFIFLYL. Residues 26–433 lie on the Extracellular side of the membrane; the sequence is RNPGPEEAEA…QSHFNSQPHH (408 aa). 4 disulfides stabilise this stretch: C57–C209, C143–C358, C164–C191, and C367–C398. N112 carries an N-linked (GlcNAc...) asparagine glycan. The disordered stretch occupies residues 233–275; that stretch reads NITPGVTPPANSKPKTGQGPPKPSPDENSYTAPNTIFKQSPPH. Residues 258–275 show a composition bias toward polar residues; the sequence is DENSYTAPNTIFKQSPPH. Residues 413 to 433 form a disordered region; it reads VPPEPHWQFPQQSHFNSQPHH. Residues 421 to 433 show a composition bias toward polar residues; sequence FPQQSHFNSQPHH.

Belongs to the glycosyltransferase 14 family.

The protein localises to the golgi apparatus membrane. It participates in protein modification; protein glycosylation. In terms of biological role, probable glycosyltransferase. This is Probable beta-1,3-galactosyl-O-glycosyl-glycoprotein beta-1,6-N-acetylglucosaminyltransferase 7 from Mus musculus (Mouse).